A 340-amino-acid chain; its full sequence is Phosphate acyltransferase (340 aa).

This sequence belongs to the PlsX family. In terms of assembly, homodimer. Probably interacts with PlsY.

It is found in the cytoplasm. The enzyme catalyses a fatty acyl-[ACP] + phosphate = an acyl phosphate + holo-[ACP]. Its pathway is lipid metabolism; phospholipid metabolism. In terms of biological role, catalyzes the reversible formation of acyl-phosphate (acyl-PO(4)) from acyl-[acyl-carrier-protein] (acyl-ACP). This enzyme utilizes acyl-ACP as fatty acyl donor, but not acyl-CoA. This Pseudomonas syringae pv. syringae (strain B728a) protein is Phosphate acyltransferase.